The primary structure comprises 134 residues: RxLR effector protein Avh238 (134 aa).

The first 21 residues, 1 to 21 (MRGVFFVAVAVAIFARSSAEA), serve as a signal peptide directing secretion. The RxLR-dEER motif lies at 44-68 (RFLRVADPEDDDLAAPADDGKTEER). Positions 49 to 70 (ADPEDDDLAAPADDGKTEERAP) are disordered. Positions 61-70 (DDGKTEERAP) are enriched in basic and acidic residues.

The protein belongs to the RxLR effector family. In terms of assembly, interacts with host 1-aminocyclopropane-1-carboxylate synthases ACS1, ACS2, ACS3, ACS10 and ACS12.

Its subcellular location is the secreted. It is found in the host cytoplasm. The protein localises to the host nucleus. Functionally, effector that suppresses plant defense responses during the early stages of pathogen infection. Suppresses cell death induced by effectors and PAMPs in plant hosts. Is able to induced cell death in tomato, tobacco, eggplant, and potato, but not in A.thaliana. Interacts with and destabilizes host 1-aminocyclopropane-1-carboxylate synthases. By suppressing type2 ACS-catalyzed ethylene biosynthesis, Avh238 facilitates Phytophthora infection. This Phytophthora sojae (strain P6497) (Soybean stem and root rot agent) protein is RxLR effector protein Avh238 (Avh238).